Here is a 267-residue protein sequence, read N- to C-terminus: Tryptophan synthase alpha chain (267 aa).

Residues Glu49 and Asp60 each act as proton acceptor in the active site.

It belongs to the TrpA family. In terms of assembly, tetramer of two alpha and two beta chains.

It catalyses the reaction (1S,2R)-1-C-(indol-3-yl)glycerol 3-phosphate + L-serine = D-glyceraldehyde 3-phosphate + L-tryptophan + H2O. It participates in amino-acid biosynthesis; L-tryptophan biosynthesis; L-tryptophan from chorismate: step 5/5. Its function is as follows. The alpha subunit is responsible for the aldol cleavage of indoleglycerol phosphate to indole and glyceraldehyde 3-phosphate. This Cyanothece sp. (strain PCC 7425 / ATCC 29141) protein is Tryptophan synthase alpha chain.